We begin with the raw amino-acid sequence, 484 residues long: Bifunctional protein GlmU (484 aa).

Residues 1–240 (MSASRPAAVM…RTEVEGVNDR (240 aa)) form a pyrophosphorylase region. UDP-N-acetyl-alpha-D-glucosamine is bound by residues 12–15 (LAAG), Lys26, Gln79, and 84–85 (GT). Asp113 contributes to the Mg(2+) binding site. Residues Gly150, Glu165, Asn180, and Asn238 each contribute to the UDP-N-acetyl-alpha-D-glucosamine site. Mg(2+) is bound at residue Asn238. Residues 241–261 (VQLAEARRLLNARLLEQLMRD) are linker. The tract at residues 262 to 484 (GVTVVDPAST…RARARSEEDR (223 aa)) is N-acetyltransferase. Residues Arg343 and Lys361 each coordinate UDP-N-acetyl-alpha-D-glucosamine. His373 acts as the Proton acceptor in catalysis. UDP-N-acetyl-alpha-D-glucosamine contacts are provided by Tyr376 and Asn387. Acetyl-CoA is bound by residues Ala390, 396 to 397 (NY), Ser415, and Ala433. The segment at 457 to 484 (EGWVERKRPGTPAAQAAERARARSEEDR) is disordered. Residues 474-484 (ERARARSEEDR) are compositionally biased toward basic and acidic residues.

It in the N-terminal section; belongs to the N-acetylglucosamine-1-phosphate uridyltransferase family. The protein in the C-terminal section; belongs to the transferase hexapeptide repeat family. Homotrimer. It depends on Mg(2+) as a cofactor.

It is found in the cytoplasm. It catalyses the reaction alpha-D-glucosamine 1-phosphate + acetyl-CoA = N-acetyl-alpha-D-glucosamine 1-phosphate + CoA + H(+). The enzyme catalyses N-acetyl-alpha-D-glucosamine 1-phosphate + UTP + H(+) = UDP-N-acetyl-alpha-D-glucosamine + diphosphate. Its pathway is nucleotide-sugar biosynthesis; UDP-N-acetyl-alpha-D-glucosamine biosynthesis; N-acetyl-alpha-D-glucosamine 1-phosphate from alpha-D-glucosamine 6-phosphate (route II): step 2/2. The protein operates within nucleotide-sugar biosynthesis; UDP-N-acetyl-alpha-D-glucosamine biosynthesis; UDP-N-acetyl-alpha-D-glucosamine from N-acetyl-alpha-D-glucosamine 1-phosphate: step 1/1. It functions in the pathway bacterial outer membrane biogenesis; LPS lipid A biosynthesis. In terms of biological role, catalyzes the last two sequential reactions in the de novo biosynthetic pathway for UDP-N-acetylglucosamine (UDP-GlcNAc). The C-terminal domain catalyzes the transfer of acetyl group from acetyl coenzyme A to glucosamine-1-phosphate (GlcN-1-P) to produce N-acetylglucosamine-1-phosphate (GlcNAc-1-P), which is converted into UDP-GlcNAc by the transfer of uridine 5-monophosphate (from uridine 5-triphosphate), a reaction catalyzed by the N-terminal domain. The protein is Bifunctional protein GlmU of Thermobifida fusca (strain YX).